The sequence spans 602 residues: MSSMRTHYCGLVTEQLIGQEVALTGWVQRRRDHGGVIFIDLRDREGLVQVVCDPDRPEMFKAAEEIRNEFCIRITGKVRPRPAGTENANLTSGKIEVLCHELTVLNPSVTPPFQLDDDNLSETTRLTHRVLDLRRPQMQYNLRLRYKVAMEVRKYLDAQGFIDIETPMLGKSTPEGARDYLVPSRVNPGHFFALPQSPQIFKQMLMVSGFDRYYQITKCFRDEDLRADRQPEFTQIDCETSFLTEQEIRDLFEDMMRTVFKNAIDVDLDAKFPVMEFREAMARFGSDKPDLRVKLEFTELTEVMKDVDFKVFSGPANSDNGRVVGLRVPGGGAISRGEIDAYTQFVAIYGAKGLAWIKVNEVAKGRDGLQSPIVKNLHDAAIAEILKRTGAQDGDIIFFGADKAKIVNDAIGALRLKVGHSEFGKSTGLFEDTWKPLWVIDFPMFEYDEEDARWVAMHHPFTSPKDEHLQYLETDPGKCIAKAYDMVLNGWEMGGGSVRIYREDVQSKVFRALKINDEEARAKFGYLLDALQYGAPPHGGLAFGLDRIVTMMAGADSIRDVIAFPKTQRAQDLLTQAPSTVDEKQLRELHIRLRAQEPKTTA.

Glu-175 contributes to the L-aspartate binding site. Residues 199–202 (QIFK) form an aspartate region. Arg-221 lines the L-aspartate pocket. ATP contacts are provided by residues 221–223 (RDE) and Gln-230. An L-aspartate-binding site is contributed by His-458. Glu-492 serves as a coordination point for ATP. Arg-499 is an L-aspartate binding site. 544-547 (GLDR) contributes to the ATP binding site.

The protein belongs to the class-II aminoacyl-tRNA synthetase family. Type 1 subfamily. In terms of assembly, homodimer.

The protein localises to the cytoplasm. It carries out the reaction tRNA(Asx) + L-aspartate + ATP = L-aspartyl-tRNA(Asx) + AMP + diphosphate. Aspartyl-tRNA synthetase with relaxed tRNA specificity since it is able to aspartylate not only its cognate tRNA(Asp) but also tRNA(Asn). Reaction proceeds in two steps: L-aspartate is first activated by ATP to form Asp-AMP and then transferred to the acceptor end of tRNA(Asp/Asn). The chain is Aspartate--tRNA(Asp/Asn) ligase from Cupriavidus metallidurans (strain ATCC 43123 / DSM 2839 / NBRC 102507 / CH34) (Ralstonia metallidurans).